We begin with the raw amino-acid sequence, 1966 residues long: Probable serine/threonine-protein kinase vps15 (1966 aa).

A Protein kinase domain is found at 21–303 (IVFKKSLGNA…QYFSFAHQFI (283 aa)). Residues 27-35 (LGNARFLKT) and lysine 49 each bind ATP. The Proton acceptor role is filled by aspartate 144. Residues 362 to 407 (PILISNNNNNNNNNNNNNNNNNNNNNNNNNNNNNNNNNQTTTTTTN) form a disordered region. Positions 367–407 (NNNNNNNNNNNNNNNNNNNNNNNNNNNNNNNNNQTTTTTTN) are enriched in low complexity. HEAT repeat units lie at residues 558 to 596 (CRLQKIVPYIMSMISPEQPTLVRVEALRSLAKVLEMVQT), 604 to 642 (IFGQYILPSLSQLSHESTDEIIRIAFAEILPQLATTAKR), 717 to 754 (KTNESVLPLIITFLNDRDWQLRCAFFENIVAVCTVVGA), and 756 to 793 (SLESFIYPCILLALTDEEEFVTEKALSSLSELCSLGLL). 4 disordered regions span residues 916 to 937 (SFNSNGSGGGGNPNLVSSTGGS), 1036 to 1062 (SSSNNSNNNTLSSSTTSSNSTTPTNST), 1106 to 1130 (GGITTGGTTTTTLGRSSSPQLTGLN), and 1190 to 1263 (TSLS…NNMN). Composition is skewed to low complexity over residues 1106–1119 (GGITTGGTTTTTLG) and 1192–1263 (LSNS…NNMN). WD repeat units lie at residues 1460 to 1499 (EHKAAVNEIQVSSDNLFFATASNDGTVKIWDCQRMEKSVT), 1508 to 1547 (QQEGRITSISICEKTHSIASASDKGSIHVFRVGISGKQKN), 1564 to 1605 (TTRG…DAFN), and 1610 to 1649 (ASLGLIQAFLIDPNRNWLVTGTSRGFLTCWDLRFGIPLYS). The tract at residues 1699–1743 (RSYEQPPQQQPQQPQPPQQQQQQQSQMNRSINMTSSTTTTTTSSY) is disordered. Low complexity-rich tracts occupy residues 1703-1722 (QPPQQQPQQPQPPQQQQQQQ) and 1732-1742 (TSSTTTTTTSS). WD repeat units follow at residues 1790 to 1829 (KPTPLVRALLNPPNCPFLITAGDDKRIKLWDWNNLPQSYY) and 1935 to 1966 (HHQEPILDIKMMEVPNPMLISASTDGVVKVWK).

Belongs to the protein kinase superfamily. Ser/Thr protein kinase family.

It catalyses the reaction L-seryl-[protein] + ATP = O-phospho-L-seryl-[protein] + ADP + H(+). The catalysed reaction is L-threonyl-[protein] + ATP = O-phospho-L-threonyl-[protein] + ADP + H(+). The chain is Probable serine/threonine-protein kinase vps15 (vps15) from Dictyostelium discoideum (Social amoeba).